The chain runs to 310 residues: Probable RuBisCO transcriptional regulator (310 aa).

In terms of domain architecture, HTH lysR-type spans 6–63 (FTLDQLRILKAIASEGSFKKAAESLYISQPAVSLQIQNLEKQLNIPIFDRANRKAVFT). Residues 23-42 (FKKAAESLYISQPAVSLQIQ) constitute a DNA-binding region (H-T-H motif).

The protein belongs to the LysR transcriptional regulatory family.

The protein localises to the plastid. The protein resides in the chloroplast. Functionally, trans-acting transcriptional regulator of RuBisCO genes (rbcL and rbcS) expression. This is Probable RuBisCO transcriptional regulator (rbcR) from Guillardia theta (Cryptophyte).